The following is a 1089-amino-acid chain: Probable transport protein MmpL8 (1089 aa).

A disordered region spans residues 1–26 (MCDVLMQPVRTPRPSTNLRSKPLRPT). The next 12 helical transmembrane spans lie at 44–64 (WVVIAFWVALAGLLAPTVPSL), 222–242 (ITILLLVILLIIYGNPITMVL), 257–277 (LVAIAGLAGLGIANQSIIFMS), 316–336 (IGKVIAASAATVAITFLGMVF), 349–369 (LGISVAVVFFAAVTLLPALMV), 400–420 (KTHLLASALVLVILAGCAGLA), 555–575 (AISTVGGLIDALAYLQDLLGG), 874–894 (IIAMTVCIVLLILIVLLRAIV), 898–918 (YLIGSVIVSYLAALGIGVIVF), 930–950 (IPGLTFVILVAVGADYNMLLI), 973–993 (GGVITAAGLIMAASMYGLVFA), and 996–1016 (GSVVQGAFVLGTGLLLDTFLV). The interval 1056 to 1078 (RTKRKPLLPKEEEEQSPPDDDDL) is disordered. Residues 1066–1078 (EEEEQSPPDDDDL) show a composition bias toward acidic residues.

It belongs to the resistance-nodulation-cell division (RND) (TC 2.A.6) family. MmpL subfamily.

Its subcellular location is the cell membrane. This Mycobacterium tuberculosis (strain ATCC 25177 / H37Ra) protein is Probable transport protein MmpL8 (mmpL8).